We begin with the raw amino-acid sequence, 259 residues long: Phosphate import ATP-binding protein PstB (259 aa).

An ABC transporter domain is found at 6 to 254; it reads SKNESVVFDV…PKDKRTEDYI (249 aa). 45–52 serves as a coordination point for ATP; it reads GPSGCGKS.

It belongs to the ABC transporter superfamily. Phosphate importer (TC 3.A.1.7) family. As to quaternary structure, the complex is composed of two ATP-binding proteins (PstB), two transmembrane proteins (PstC and PstA) and a solute-binding protein (PstS).

It localises to the cell membrane. The catalysed reaction is phosphate(out) + ATP + H2O = ADP + 2 phosphate(in) + H(+). Functionally, part of the ABC transporter complex PstSACB involved in phosphate import. Responsible for energy coupling to the transport system. The protein is Phosphate import ATP-binding protein PstB of Desulfitobacterium hafniense (strain Y51).